Reading from the N-terminus, the 115-residue chain is Probable non-functional T cell receptor beta variable 7-1 (115 aa).

A signal peptide spans 1–21; it reads MGTRLLCWAAICLLGADHTGA. Residues 22 to 115 enclose the Ig-like domain; that stretch reads GVSQSLRHKV…LAVYLCASSS (94 aa).

In terms of assembly, most probably, the alpha-beta TR is not assembled due to incorrect folding of the beta chain. Alpha-beta TR is a heterodimer composed of an alpha and beta chain; disulfide-linked. The alpha-beta TR is associated with the transmembrane signaling CD3 coreceptor proteins to form the TR-CD3 (TcR or TCR). The assembly of alpha-beta TR heterodimers with CD3 occurs in the endoplasmic reticulum where a single alpha-beta TR heterodimer associates with one CD3D-CD3E heterodimer, one CD3G-CD3E heterodimer and one CD247 homodimer forming a stable octameric structure. CD3D-CD3E and CD3G-CD3E heterodimers preferentially associate with TR alpha and TR beta chains, respectively. The association of the CD247 homodimer is the last step of TcR assembly in the endoplasmic reticulum and is required for transport to the cell surface.

The protein resides in the cell membrane. Probable non-functional open reading frame (ORF) of V region of the variable domain of T cell receptor (TR) beta chain. Non-functional ORF generally cannot participate in the synthesis of a productive T cell receptor (TR) chain due to altered V-(D)-J or switch recombination and/or splicing site (at mRNA level) and/or conserved amino acid change (protein level). Alpha-beta T cell receptors are antigen specific receptors which are essential to the immune response and are present on the cell surface of T lymphocytes. Recognize peptide-major histocompatibility (MH) (pMH) complexes that are displayed by antigen presenting cells (APC), a prerequisite for efficient T cell adaptive immunity against pathogens. Binding of alpha-beta TR to pMH complex initiates TR-CD3 clustering on the cell surface and intracellular activation of LCK that phosphorylates the ITAM motifs of CD3G, CD3D, CD3E and CD247 enabling the recruitment of ZAP70. In turn ZAP70 phosphorylates LAT, which recruits numerous signaling molecules to form the LAT signalosome. The LAT signalosome propagates signal branching to three major signaling pathways, the calcium, the mitogen-activated protein kinase (MAPK) kinase and the nuclear factor NF-kappa-B (NF-kB) pathways, leading to the mobilization of transcription factors that are critical for gene expression and essential for T cell growth and differentiation. The T cell repertoire is generated in the thymus, by V-(D)-J rearrangement. This repertoire is then shaped by intrathymic selection events to generate a peripheral T cell pool of self-MH restricted, non-autoaggressive T cells. Post-thymic interaction of alpha-beta TR with the pMH complexes shapes TR structural and functional avidity. The polypeptide is Probable non-functional T cell receptor beta variable 7-1 (Homo sapiens (Human)).